We begin with the raw amino-acid sequence, 573 residues long: Putative cytochrome c oxidase subunit 1-beta (573 aa).

The helical transmembrane segment at Val53–Ala73 threads the bilayer. Residue His100 coordinates Fe(II)-heme a. 6 helical membrane-spanning segments follow: residues Ile103–Leu123, Trp141–Ala161, Gly188–Ile208, Ile227–Met247, Leu272–Val292, and Ile304–Val324. His278 and Tyr282 together coordinate Cu cation. Residues His278–Tyr282 constitute a cross-link (1'-histidyl-3'-tyrosine (His-Tyr)). Cu cation is bound by residues His327 and His328. A run of 2 helical transmembrane segments spans residues Met329 to Val349 and Met373 to Ile393. Heme a3 is bound at residue His411. 3 helical membrane passes run Leu412 to Trp432, Ile447 to Gly467, and Ile490 to Trp510. His413 is a binding site for Fe(II)-heme a.

It belongs to the heme-copper respiratory oxidase family. As to quaternary structure, associates with subunits II, III and IV to form cytochrome c oxidase. The cofactor is Cu(2+). Heme is required as a cofactor.

It is found in the cell membrane. It carries out the reaction 4 Fe(II)-[cytochrome c] + O2 + 8 H(+)(in) = 4 Fe(III)-[cytochrome c] + 2 H2O + 4 H(+)(out). The protein operates within energy metabolism; oxidative phosphorylation. In terms of biological role, cytochrome c oxidase is the component of the respiratory chain that catalyzes the reduction of oxygen to water. Subunits 1-3 form the functional core of the enzyme complex. CO I is the catalytic subunit of the enzyme. Electrons originating in cytochrome c are transferred via the copper A center of subunit 2 and heme A of subunit 1 to the bimetallic center formed by heme A3 and copper B. The polypeptide is Putative cytochrome c oxidase subunit 1-beta (ctaD2) (Streptomyces coelicolor (strain ATCC BAA-471 / A3(2) / M145)).